The chain runs to 274 residues: Elongation factor Ts (274 aa).

An involved in Mg(2+) ion dislocation from EF-Tu region spans residues 82–85 (TDFV).

It belongs to the EF-Ts family.

The protein resides in the cytoplasm. Its function is as follows. Associates with the EF-Tu.GDP complex and induces the exchange of GDP to GTP. It remains bound to the aminoacyl-tRNA.EF-Tu.GTP complex up to the GTP hydrolysis stage on the ribosome. The protein is Elongation factor Ts of Christiangramia forsetii (strain DSM 17595 / CGMCC 1.15422 / KT0803) (Gramella forsetii).